The primary structure comprises 112 residues: UPF0342 protein SSU05_1260 (112 aa).

The protein belongs to the UPF0342 family.

This chain is UPF0342 protein SSU05_1260, found in Streptococcus suis (strain 05ZYH33).